A 120-amino-acid polypeptide reads, in one-letter code: Ribosome-binding factor A (120 aa).

This sequence belongs to the RbfA family. Monomer. Binds 30S ribosomal subunits, but not 50S ribosomal subunits or 70S ribosomes.

It is found in the cytoplasm. Its function is as follows. One of several proteins that assist in the late maturation steps of the functional core of the 30S ribosomal subunit. Associates with free 30S ribosomal subunits (but not with 30S subunits that are part of 70S ribosomes or polysomes). Required for efficient processing of 16S rRNA. May interact with the 5'-terminal helix region of 16S rRNA. The polypeptide is Ribosome-binding factor A (Rickettsia africae (strain ESF-5)).